The primary structure comprises 720 residues: Mitogen-activated protein kinase 6 (720 aa).

Residue Met1 forms a Peptide (Met-Gly) (interchain with G-Cter in ubiquitin) linkage. The Protein kinase domain maps to 20-316 (YMDLKPLGCG…AEEALSHPYM (297 aa)). Residues 26–34 (LGCGGNGLV) and Lys49 each bind ATP. Asp152 serves as the catalytic Proton acceptor. Position 189 is a phosphoserine; by PAK1, PAK2 and PAK3 (Ser189). The SEG motif signature appears at 189 to 191 (SEG). Positions 332–337 (FHIEDE) match the FRIEDE motif motif. Phosphoserine occurs at positions 386, 452, 554, and 556. The disordered stretch occupies residues 638–657 (SEMLETEPVEEGKRGERGRE). Over residues 647–657 (EEGKRGERGRE) the composition is skewed to basic and acidic residues. Ser683 bears the Phosphoserine mark. The span at 698-714 (PSAMKSSPQIPHKTYSN) shows a compositional bias: polar residues. Positions 698–720 (PSAMKSSPQIPHKTYSNILKHLN) are disordered.

The protein belongs to the protein kinase superfamily. CMGC Ser/Thr protein kinase family. MAP kinase subfamily. As to quaternary structure, heterodimer with ERK4/MAPK4. Interacts with (via FRIEDE motif) MAPKAPK5. Interacts with UBE3A; this interaction may be indirect and mediated by HERC2, possibly via HERC2 interaction with NEURL4. Requires Mg(2+) as cofactor. In terms of processing, phosphorylated at Ser-189 by PAK1, PAK2 and PAK3 resulting in catalytic activation. Phosphorylated by MAPKAPK5 at other sites. Post-translationally, ubiquitination at Met-1 leads to degradation by the proteasome pathway. As to expression, highest levels within the nervous system, expressed in different tissues, mostly in skeletal muscle.

Its subcellular location is the cytoplasm. It is found in the nucleus. It carries out the reaction L-seryl-[protein] + ATP = O-phospho-L-seryl-[protein] + ADP + H(+). The catalysed reaction is L-threonyl-[protein] + ATP = O-phospho-L-threonyl-[protein] + ADP + H(+). With respect to regulation, activated by phosphorylation at Ser-189. Atypical MAPK protein. Phosphorylates microtubule-associated protein 2 (MAP2) and MAPKAPK5. The precise role of the complex formed with MAPKAPK5 is still unclear, but the complex follows a complex set of phosphorylation events: upon interaction with atypical MAPKAPK5, ERK3/MAPK6 is phosphorylated at Ser-189 and then mediates phosphorylation and activation of MAPKAPK5, which in turn phosphorylates ERK3/MAPK6. May promote entry in the cell cycle. The chain is Mitogen-activated protein kinase 6 (Mapk6) from Rattus norvegicus (Rat).